The sequence spans 361 residues: Cysteine-rich with EGF-like domain protein 2-A (361 aa).

The first 24 residues, 1 to 24 (MNGSRALHLSAWLLLCLLCSAAVA), serve as a signal peptide directing secretion. The EGF-like 1 domain occupies 134–176 (DCLACLGGSERPCHGNGFCNGDGTRSGDGLCRCEAEYTGPFCL). Cystine bridges form between Cys-138-Cys-152, Cys-146-Cys-164, and Cys-166-Cys-175. An N-linked (GlcNAc...) asparagine glycan is attached at Asn-188. FU repeat units follow at residues 191–238 (YSLC…EESP) and 251–298 (SFLC…SEQV). The region spanning 288 to 329 (DVDECDASEQVCSRENETCLNTAGSYKCTCSEGFEDKEGNCV) is the EGF-like 2; calcium-binding domain. Cystine bridges form between Cys-292-Cys-306, Cys-299-Cys-315, and Cys-317-Cys-328. Asn-303 carries an N-linked (GlcNAc...) asparagine glycan. Residues 341–361 (DGEMGTSASDINISNTAHEDL) are disordered. Positions 346–361 (TSASDINISNTAHEDL) are enriched in polar residues. N-linked (GlcNAc...) asparagine glycosylation occurs at Asn-352.

Belongs to the CRELD family.

Its subcellular location is the secreted. The protein localises to the endoplasmic reticulum. Possible role in neuronal acetylcholine receptor transport. The protein is Cysteine-rich with EGF-like domain protein 2-A (creld2-a) of Xenopus laevis (African clawed frog).